Consider the following 330-residue polypeptide: uncharacterized protein (330 aa).

The helical transmembrane segment at 2 to 22 threads the bilayer; the sequence is IKPIYLIIIGTVICLVILYYF. N-linked (GlcNAc...) asparagine; by host glycans are attached at residues N72, N94, N234, and N315.

It localises to the membrane. This is an uncharacterized protein from Acanthamoeba polyphaga mimivirus (APMV).